The chain runs to 512 residues: Maturase K (512 aa).

This sequence belongs to the intron maturase 2 family. MatK subfamily.

The protein localises to the plastid. The protein resides in the chloroplast. In terms of biological role, usually encoded in the trnK tRNA gene intron. Probably assists in splicing its own and other chloroplast group II introns. This chain is Maturase K, found in Koelreuteria paniculata (Goldenrain tree).